A 263-amino-acid polypeptide reads, in one-letter code: Putative cysteine-rich repeat secretory protein 31 (263 aa).

A signal peptide spans 1 to 32 (MHNSYSLSKRLVLVLFLAVVATQLFLIRNVSS). Gnk2-homologous domains follow at residues 39 to 141 (YLHH…AIEV) and 146 to 260 (YDNN…FYPF).

The protein belongs to the cysteine-rich repeat secretory protein family.

The protein resides in the secreted. The polypeptide is Putative cysteine-rich repeat secretory protein 31 (CRRSP31) (Arabidopsis thaliana (Mouse-ear cress)).